We begin with the raw amino-acid sequence, 141 residues long: Large ribosomal subunit protein uL11 (141 aa).

This sequence belongs to the universal ribosomal protein uL11 family. In terms of assembly, part of the ribosomal stalk of the 50S ribosomal subunit. Interacts with L10 and the large rRNA to form the base of the stalk. L10 forms an elongated spine to which L12 dimers bind in a sequential fashion forming a multimeric L10(L12)X complex. One or more lysine residues are methylated.

Functionally, forms part of the ribosomal stalk which helps the ribosome interact with GTP-bound translation factors. The protein is Large ribosomal subunit protein uL11 of Campylobacter concisus (strain 13826).